A 120-amino-acid polypeptide reads, in one-letter code: Prefoldin subunit beta (120 aa).

Belongs to the prefoldin subunit beta family. Heterohexamer of two alpha and four beta subunits.

The protein localises to the cytoplasm. In terms of biological role, molecular chaperone capable of stabilizing a range of proteins. Seems to fulfill an ATP-independent, HSP70-like function in archaeal de novo protein folding. This Methanothrix thermoacetophila (strain DSM 6194 / JCM 14653 / NBRC 101360 / PT) (Methanosaeta thermophila) protein is Prefoldin subunit beta.